A 385-amino-acid chain; its full sequence is A-type ATP synthase subunit C (385 aa).

It belongs to the V-ATPase V0D/AC39 subunit family. Has multiple subunits with at least A(3), B(3), C, D, E, F, H, I and proteolipid K(x).

The protein localises to the cell membrane. Its function is as follows. Component of the A-type ATP synthase that produces ATP from ADP in the presence of a proton gradient across the membrane. In Methanothermobacter thermautotrophicus (strain ATCC 29096 / DSM 1053 / JCM 10044 / NBRC 100330 / Delta H) (Methanobacterium thermoautotrophicum), this protein is A-type ATP synthase subunit C.